The primary structure comprises 240 residues: Ubiquinone biosynthesis O-methyltransferase (240 aa).

The S-adenosyl-L-methionine site is built by arginine 36, glycine 66, aspartate 87, and methionine 129.

It belongs to the methyltransferase superfamily. UbiG/COQ3 family.

The catalysed reaction is a 3-demethylubiquinol + S-adenosyl-L-methionine = a ubiquinol + S-adenosyl-L-homocysteine + H(+). It carries out the reaction a 3-(all-trans-polyprenyl)benzene-1,2-diol + S-adenosyl-L-methionine = a 2-methoxy-6-(all-trans-polyprenyl)phenol + S-adenosyl-L-homocysteine + H(+). It participates in cofactor biosynthesis; ubiquinone biosynthesis. Functionally, O-methyltransferase that catalyzes the 2 O-methylation steps in the ubiquinone biosynthetic pathway. The sequence is that of Ubiquinone biosynthesis O-methyltransferase from Pelagibacter ubique (strain HTCC1062).